The chain runs to 398 residues: MSKLVLVLNCGSSSLKFAVVDAETGAEHLTGLAECLGLPEARMKWKLDGKHEAQLGAGAAHVEALSFMVETILASKPELKANLGAIGHRIVHGGEQFTQSALITDDVLKGIQDAATFAPLHNPAHLIGIEAAKVNFPGLQNVAVFDTAFHQTMPEESYLYALPYNLYKEHGIRRYGMHGTSHLFITREVANLLDKPVEEVNIINCHLGNGASVCAIKNGKSVDTSMGLTPLEGLVMGTRCGDIDPAIVFHLHDALGYSVEQINNMLTKESGLAGLTEVTSDCRFVEDNYGEKEEATRAMDVFCHRLAKYVAGYTASMEGRLDAITFTGGIGENSGPIREMVLNRLGIFGIEVDGEANLKARFGGEGTITTANSRIPAMVISTNEELVIAEDAARLAGL.

Asn9 is a Mg(2+) binding site. Lys16 serves as a coordination point for ATP. Substrate is bound at residue Arg89. The active-site Proton donor/acceptor is Asp146. ATP-binding positions include His206–Gly210, Asp281–Arg283, and Gly329–Asn333. Mg(2+) is bound at residue Glu384.

Belongs to the acetokinase family. In terms of assembly, homodimer. Mg(2+) is required as a cofactor. Mn(2+) serves as cofactor.

The protein resides in the cytoplasm. It carries out the reaction acetate + ATP = acetyl phosphate + ADP. The protein operates within metabolic intermediate biosynthesis; acetyl-CoA biosynthesis; acetyl-CoA from acetate: step 1/2. Catalyzes the formation of acetyl phosphate from acetate and ATP. Can also catalyze the reverse reaction. This chain is Acetate kinase, found in Vibrio campbellii (strain ATCC BAA-1116).